Reading from the N-terminus, the 65-residue chain is Small ribosomal subunit protein bS21A (65 aa).

The protein belongs to the bacterial ribosomal protein bS21 family.

The protein is Small ribosomal subunit protein bS21A of Francisella tularensis subsp. holarctica (strain LVS).